We begin with the raw amino-acid sequence, 670 residues long: DNA ligase (670 aa).

NAD(+) is bound by residues 31 to 35 (DAEYD), 76 to 77 (SL), and E108. The active-site N6-AMP-lysine intermediate is K110. Positions 131, 166, 271, and 295 each coordinate NAD(+). Zn(2+) contacts are provided by C388, C391, C406, and C412. Residues 579–668 (NIGGSLSGKK…NTPALKKETS (90 aa)) form the BRCT domain.

This sequence belongs to the NAD-dependent DNA ligase family. LigA subfamily. Mg(2+) serves as cofactor. It depends on Mn(2+) as a cofactor.

The catalysed reaction is NAD(+) + (deoxyribonucleotide)n-3'-hydroxyl + 5'-phospho-(deoxyribonucleotide)m = (deoxyribonucleotide)n+m + AMP + beta-nicotinamide D-nucleotide.. Functionally, DNA ligase that catalyzes the formation of phosphodiester linkages between 5'-phosphoryl and 3'-hydroxyl groups in double-stranded DNA using NAD as a coenzyme and as the energy source for the reaction. It is essential for DNA replication and repair of damaged DNA. This Neorickettsia sennetsu (strain ATCC VR-367 / Miyayama) (Ehrlichia sennetsu) protein is DNA ligase.